The primary structure comprises 402 residues: Envelope glycoprotein D (402 aa).

The N-terminal stretch at 1-17 (MLLAALLAALVARTTLG) is a signal peptide. 3 disulfide bridges follow: Cys-66/Cys-189, Cys-105/Cys-205, and Cys-117/Cys-126. A profusion region spans residues 238–316 (YRKNGRTLPR…RPTPRPPRPE (79 aa)). The segment at 252 to 350 (ATPYAIDPAR…PRTPAAPGVS (99 aa)) is disordered. The segment covering 269–278 (PRPRPRPRPR) has biased composition (basic residues). The span at 282-292 (EPAPATPAPPD) shows a compositional bias: pro residues. Positions 293-304 (RLPEPATRDHAA) are enriched in basic and acidic residues. A helical transmembrane segment spans residues 356-376 (IVGTGTAMGALLVGVCVYIFF).

It belongs to the herpesviridae glycoprotein D family. Not N-glycosylated.

It is found in the virion membrane. Its function is as follows. Envelope glycoprotein that binds to the host cell entry receptor NECTIN1, promoting the virus entry into host cells. In contrast, does not use host TNFRSF14 as receptor. May trigger fusion with host membrane, by recruiting the fusion machinery composed of gB and gH/gL. The polypeptide is Envelope glycoprotein D (Suid herpesvirus 1 (strain Rice) (SuHV-1)).